The following is a 405-amino-acid chain: Beta-citrylglutamate synthase B (405 aa).

Residues 115-300 (FQELAGHGVP…VAGIVADFVL (186 aa)) enclose the ATP-grasp domain. ATP contacts are provided by residues K154, 189–199 (QEYVKESHGRD), and R215. The Mg(2+) site is built by D260, E273, and N275. Residues D260, E273, and N275 each contribute to the Mn(2+) site. The disordered stretch occupies residues 359–387 (AMSTMSTSSTSSESEADLTETGPTPVGAN). Positions 360 to 371 (MSTMSTSSTSSE) are enriched in low complexity.

It belongs to the RimK family. Mg(2+) is required as a cofactor. Mn(2+) serves as cofactor.

The protein resides in the cytoplasm. The catalysed reaction is citrate + L-glutamate + ATP = beta-citrylglutamate + ADP + phosphate + H(+). The enzyme catalyses N-acetyl-L-aspartate + L-glutamate + ATP = N-acetyl-L-aspartyl-L-glutamate + ADP + phosphate + H(+). Catalyzes the synthesis of beta-citryl-L-glutamate and N-acetyl-L-aspartyl-L-glutamate. Beta-citryl-L-glutamate is synthesized more efficiently than N-acetyl-L-aspartyl-L-glutamate. In Danio rerio (Zebrafish), this protein is Beta-citrylglutamate synthase B (rimklb).